Here is a 688-residue protein sequence, read N- to C-terminus: Small ribosomal subunit protein mS39 (688 aa).

A mitochondrion-targeting transit peptide spans 1-37 (MASVASARWLRVSCGLCVPLTARRAGPCGRTPSSRFY). Lysine 126 carries the N6-acetyllysine modification. 10 PPR repeats span residues 149–183 (IEEI…GTTV), 184–219 (SLET…EELE), 258–292 (NAHS…RLRA), 293–333 (DVHT…NVKP), 334–370 (NLQT…GIEP), 371–412 (SLAT…SPKD), 415–449 (DDMF…DNRK), 457–491 (RNFY…VFFP), 492–526 (HSQT…GHTF), and 575–609 (PANS…NKIP). The tract at residues 667–688 (GDLTALTSDSESDSDSDTSKDK) is disordered.

Belongs to the mitochondrion-specific ribosomal protein mS39 family. In terms of assembly, component of the mitochondrial ribosome small subunit (28S) which comprises a 12S rRNA and about 30 distinct proteins. Associated with the 12S mitochondrial rRNA (12S mt-rRNA).

Its subcellular location is the mitochondrion. Mitochondrial RNA-binding protein that has a role in mitochondrial translation. The protein is Small ribosomal subunit protein mS39 (PTCD3) of Bos taurus (Bovine).